The chain runs to 912 residues: Protein translocase subunit SecA (912 aa).

Residues Q87, 105–109 (GEGKT), and D508 contribute to the ATP site. The interval 865-912 (DEEAAQVQSGNAPVPVSQVTRDEPKVGRNDPCPCGSGKKYKHCHGQLS) is disordered. Zn(2+)-binding residues include C896, C898, C907, and H908. Over residues 902 to 912 (KKYKHCHGQLS) the composition is skewed to basic residues.

The protein belongs to the SecA family. As to quaternary structure, monomer and homodimer. Part of the essential Sec protein translocation apparatus which comprises SecA, SecYEG and auxiliary proteins SecDF-YajC and YidC. Requires Zn(2+) as cofactor.

It is found in the cell inner membrane. The protein localises to the cytoplasm. It carries out the reaction ATP + H2O + cellular proteinSide 1 = ADP + phosphate + cellular proteinSide 2.. In terms of biological role, part of the Sec protein translocase complex. Interacts with the SecYEG preprotein conducting channel. Has a central role in coupling the hydrolysis of ATP to the transfer of proteins into and across the cell membrane, serving both as a receptor for the preprotein-SecB complex and as an ATP-driven molecular motor driving the stepwise translocation of polypeptide chains across the membrane. The polypeptide is Protein translocase subunit SecA (Xanthomonas oryzae pv. oryzae (strain MAFF 311018)).